The following is a 76-amino-acid chain: uncharacterized protein (76 aa).

The N-terminal stretch at 1-20 is a signal peptide; sequence MKNAVLVFLLLSVFALSVNA.

As to expression, prismatic layer of shell (at protein level). Expressed primarily in the mantle with equal levels in the mantle edge and the mantle pallium.

It is found in the secreted. This is an uncharacterized protein from Margaritifera margaritifera (Freshwater pearl mussel).